A 297-amino-acid polypeptide reads, in one-letter code: Nuclear transcription factor Y subunit B-11 (297 aa).

The tract at residues 1–25 is disordered; the sequence is MKSRKSYGHLLSPVGSPPLDNESGE. The DNA-binding element occupies 63–69; it reads LPIANVS. A subunit association domain (SAD) region spans residues 90 to 101; it reads VQECVSEFISFV.

It belongs to the NFYB/HAP3 subunit family. As to quaternary structure, heterotrimeric transcription factor composed of three components, NF-YA, NF-YB and NF-YC. NF-YB and NF-YC must interact and dimerize for NF-YA association and DNA binding. Interacts with NFYC2, NFYC4 and NFYC6. In terms of tissue distribution, expressed in roots, culms, nodes, leaf blades, leaf sheaths and young panicles.

The protein resides in the nucleus. It localises to the cytoplasm. Probable transcription factor involved in the regulation of flowering time under long day (LD) conditions. Functions as a repressor of flowering, independently of HD1 and GHD7. Controls flowering time by negatively regulating the expression of EHD1 and HD3A. Regulates plant height by promoting cell elongation in the internodes. Component of the NF-Y/HAP transcription factor complex. This chain is Nuclear transcription factor Y subunit B-11 (HD5), found in Oryza sativa subsp. japonica (Rice).